A 556-amino-acid chain; its full sequence is Endoplasmic reticulum membrane protein 65 (556 aa).

The Cytoplasmic segment spans residues methionine 1–phenylalanine 87. The residue at position 22 (serine 22) is a Phosphoserine. A helical membrane pass occupies residues methionine 88–isoleucine 108. Topologically, residues arginine 109–arginine 151 are lumenal. Residues cysteine 152 to leucine 172 traverse the membrane as a helical segment. Topologically, residues tyrosine 173 to leucine 224 are cytoplasmic. Residues leucine 225 to isoleucine 245 traverse the membrane as a helical segment. The Lumenal segment spans residues serine 246–leucine 330. Residue asparagine 318 is glycosylated (N-linked (GlcNAc...) asparagine). A helical membrane pass occupies residues serine 331–valine 351. Residues aspartate 352 to arginine 391 lie on the Cytoplasmic side of the membrane. A helical transmembrane segment spans residues leucine 392–phenylalanine 412. At lysine 413 to phenylalanine 428 the chain is on the lumenal side. Residues methionine 429–isoleucine 449 form a helical membrane-spanning segment. The Cytoplasmic portion of the chain corresponds to lysine 450–tryptophan 556.

It belongs to the TAPT1 family. In terms of assembly, interacts with SLP1.

The protein localises to the endoplasmic reticulum membrane. It is found in the mitochondrion. Functionally, may be involved in membrane protein folding. The polypeptide is Endoplasmic reticulum membrane protein 65 (Saccharomyces cerevisiae (strain ATCC 204508 / S288c) (Baker's yeast)).